Consider the following 50-residue polypeptide: uncharacterized protein (50 aa).

This is an uncharacterized protein from Haemophilus influenzae (strain ATCC 51907 / DSM 11121 / KW20 / Rd).